The sequence spans 524 residues: Probable glutamyl-tRNA reductase 3, chloroplastic (524 aa).

Residues 1-52 (MAVSNASVVLSPNLETSSSWYHHNPSSSLDLIRIHTLPMNKMTRRGLIQRVR) constitute a chloroplast transit peptide. Residues 129-132 (TCNR), serine 189, 194-196 (ENQ), and glutamine 200 contribute to the substrate site. Cysteine 130 acts as the Nucleophile in catalysis. 269–274 (GAGEMG) lines the NADP(+) pocket.

Belongs to the glutamyl-tRNA reductase family.

The protein resides in the plastid. It localises to the chloroplast. The catalysed reaction is (S)-4-amino-5-oxopentanoate + tRNA(Glu) + NADP(+) = L-glutamyl-tRNA(Glu) + NADPH + H(+). The protein operates within porphyrin-containing compound metabolism; protoporphyrin-IX biosynthesis; 5-aminolevulinate from L-glutamyl-tRNA(Glu): step 1/2. It functions in the pathway porphyrin-containing compound metabolism; chlorophyll biosynthesis. Catalyzes the NADPH-dependent reduction of glutamyl-tRNA(Glu) to glutamate 1-semialdehyde (GSA). The sequence is that of Probable glutamyl-tRNA reductase 3, chloroplastic (HEMA3) from Arabidopsis thaliana (Mouse-ear cress).